We begin with the raw amino-acid sequence, 188 residues long: MTKFLGPIAGFGVTFSTMFKKSNTEFYPEEKVPTAPRYHGRHQLNRYADGLEKCIGCELCAWACPADAIYVEGADNTDEERFSPGERYGQVYQINYLRCIGCGLCIEACPTRALTMTNEYEMADDNRAGLIYEKDRLLAPLEPGMVESPHPMAPGATAEDYYRGTVTGGAAAAAQDESEVDDTAGDRP.

4Fe-4S ferredoxin-type domains follow at residues 44–74 (LNRYADGLEKCIGCELCAWACPADAIYVEGA) and 90–119 (QVYQINYLRCIGCGLCIEACPTRALTMTNE). The [4Fe-4S] cluster site is built by Cys-54, Cys-57, Cys-60, Cys-64, Cys-99, Cys-102, Cys-105, and Cys-109. The disordered stretch occupies residues 167–188 (TGGAAAAAQDESEVDDTAGDRP). Over residues 176–188 (DESEVDDTAGDRP) the composition is skewed to acidic residues.

This sequence belongs to the complex I 23 kDa subunit family. In terms of assembly, NDH-1 is composed of 14 different subunits. Subunits NuoA, H, J, K, L, M, N constitute the membrane sector of the complex. It depends on [4Fe-4S] cluster as a cofactor.

It is found in the cell membrane. It catalyses the reaction a quinone + NADH + 5 H(+)(in) = a quinol + NAD(+) + 4 H(+)(out). In terms of biological role, NDH-1 shuttles electrons from NADH, via FMN and iron-sulfur (Fe-S) centers, to quinones in the respiratory chain. The immediate electron acceptor for the enzyme in this species is believed to be ubiquinone. Couples the redox reaction to proton translocation (for every two electrons transferred, four hydrogen ions are translocated across the cytoplasmic membrane), and thus conserves the redox energy in a proton gradient. The sequence is that of NADH-quinone oxidoreductase subunit I from Rhodococcus jostii (strain RHA1).